Consider the following 263-residue polypeptide: 3-deoxy-manno-octulosonate cytidylyltransferase 1 (263 aa).

It belongs to the KdsB family.

The protein resides in the cytoplasm. It carries out the reaction 3-deoxy-alpha-D-manno-oct-2-ulosonate + CTP = CMP-3-deoxy-beta-D-manno-octulosonate + diphosphate. It participates in nucleotide-sugar biosynthesis; CMP-3-deoxy-D-manno-octulosonate biosynthesis; CMP-3-deoxy-D-manno-octulosonate from 3-deoxy-D-manno-octulosonate and CTP: step 1/1. It functions in the pathway bacterial outer membrane biogenesis; lipopolysaccharide biosynthesis. Its function is as follows. Activates KDO (a required 8-carbon sugar) for incorporation into bacterial lipopolysaccharide in Gram-negative bacteria. The chain is 3-deoxy-manno-octulosonate cytidylyltransferase 1 from Burkholderia ambifaria (strain ATCC BAA-244 / DSM 16087 / CCUG 44356 / LMG 19182 / AMMD) (Burkholderia cepacia (strain AMMD)).